The chain runs to 709 residues: Probable serine/threonine-protein kinase zyg-1 (709 aa).

Residues 13-251 (FQNLQQIGQG…LKEIVMTDYV (239 aa)) enclose the Protein kinase domain. ATP-binding positions include 19-27 (IGQGGFGVV) and Lys41. Asp130 functions as the Proton acceptor in the catalytic mechanism. Disordered regions lie at residues 254–329 (KMGE…DRAR) and 591–633 (SSSQ…PAAT). 2 stretches are compositionally biased toward basic and acidic residues: residues 262–291 (SREHSRDSRSQRSREPFRSSRDGISLERRP) and 302–313 (SRRDPDGYRAAH). Over residues 607-627 (PLSSRTTSSLNVRNGVSSDEN) the composition is skewed to polar residues.

This sequence belongs to the protein kinase superfamily. Ser/Thr protein kinase family.

The protein localises to the cytoplasm. It is found in the cytoskeleton. The protein resides in the microtubule organizing center. Its subcellular location is the centrosome. It localises to the centriole. The catalysed reaction is L-seryl-[protein] + ATP = O-phospho-L-seryl-[protein] + ADP + H(+). It carries out the reaction L-threonyl-[protein] + ATP = O-phospho-L-threonyl-[protein] + ADP + H(+). Protein kinase that plays a central role in centrosome duplication. Paternal copy is required to regulate synthesis of daughter centrioles prior to fertilization. Maternal copy regulates centrosome duplication during later cell cycles. Functions upstream of sas-5 and sas-6, and is required for their localization to the centrosome. The sequence is that of Probable serine/threonine-protein kinase zyg-1 (zyg-1) from Caenorhabditis briggsae.